A 331-amino-acid chain; its full sequence is Ketol-acid reductoisomerase (NADP(+)) (331 aa).

Positions Ala2–Thr182 constitute a KARI N-terminal Rossmann domain. NADP(+)-binding positions include Tyr25–Gln28, Ser51, Ser53, and Asp83–Gln86. His108 is a catalytic residue. Gly134 contacts NADP(+). Positions Thr183 to Leu328 constitute a KARI C-terminal knotted domain. Residues Asp191, Glu195, Glu227, and Glu231 each contribute to the Mg(2+) site. Ser252 contributes to the substrate binding site.

It belongs to the ketol-acid reductoisomerase family. Mg(2+) serves as cofactor.

It carries out the reaction (2R)-2,3-dihydroxy-3-methylbutanoate + NADP(+) = (2S)-2-acetolactate + NADPH + H(+). The enzyme catalyses (2R,3R)-2,3-dihydroxy-3-methylpentanoate + NADP(+) = (S)-2-ethyl-2-hydroxy-3-oxobutanoate + NADPH + H(+). Its pathway is amino-acid biosynthesis; L-isoleucine biosynthesis; L-isoleucine from 2-oxobutanoate: step 2/4. The protein operates within amino-acid biosynthesis; L-valine biosynthesis; L-valine from pyruvate: step 2/4. Functionally, involved in the biosynthesis of branched-chain amino acids (BCAA). Catalyzes an alkyl-migration followed by a ketol-acid reduction of (S)-2-acetolactate (S2AL) to yield (R)-2,3-dihydroxy-isovalerate. In the isomerase reaction, S2AL is rearranged via a Mg-dependent methyl migration to produce 3-hydroxy-3-methyl-2-ketobutyrate (HMKB). In the reductase reaction, this 2-ketoacid undergoes a metal-dependent reduction by NADPH to yield (R)-2,3-dihydroxy-isovalerate. The protein is Ketol-acid reductoisomerase (NADP(+)) of Nostoc punctiforme (strain ATCC 29133 / PCC 73102).